A 169-amino-acid polypeptide reads, in one-letter code: Menaquinol:cytochrome c reductase iron-sulfur subunit (169 aa).

A Rieske domain is found at 62–160 (EPKRFDFKVK…FEVKDGKLYL (99 aa)). [2Fe-2S] cluster contacts are provided by C102, H104, C123, and H126. The cysteines at positions 107 and 125 are disulfide-linked.

Belongs to the Rieske iron-sulfur protein family. As to quaternary structure, the main subunits of the menaquinol:cytochrome c complex are a Rieske-type iron-sulfur protein (QcrA), a cytochrome b (QcrB) and a cytochrome c (QcrC). [2Fe-2S] cluster serves as cofactor.

Its function is as follows. Component of the menaquinol:cytochrome c reductase complex. The Rieske protein is a high potential 2Fe-2S protein. In Geobacillus thermodenitrificans, this protein is Menaquinol:cytochrome c reductase iron-sulfur subunit (qcrA).